The sequence spans 319 residues: tRNA dimethylallyltransferase (319 aa).

10–17 (GPTAVGKT) contributes to the ATP binding site. Substrate is bound at residue 12–17 (TAVGKT). The interval 35 to 38 (DSMQ) is interaction with substrate tRNA.

The protein belongs to the IPP transferase family. In terms of assembly, monomer. Mg(2+) is required as a cofactor.

The enzyme catalyses adenosine(37) in tRNA + dimethylallyl diphosphate = N(6)-dimethylallyladenosine(37) in tRNA + diphosphate. Catalyzes the transfer of a dimethylallyl group onto the adenine at position 37 in tRNAs that read codons beginning with uridine, leading to the formation of N6-(dimethylallyl)adenosine (i(6)A). This chain is tRNA dimethylallyltransferase, found in Symbiobacterium thermophilum (strain DSM 24528 / JCM 14929 / IAM 14863 / T).